Reading from the N-terminus, the 400-residue chain is Elongation factor Tu (400 aa).

In terms of domain architecture, tr-type G spans 10–210; it reads KPHINVGTIG…ALDEYIPEPK (201 aa). Residues 19-26 are G1; the sequence is GHVDHGKT. 19 to 26 contributes to the GTP binding site; that stretch reads GHVDHGKT. Thr26 serves as a coordination point for Mg(2+). The segment at 64–68 is G2; sequence GITIA. The tract at residues 85–88 is G3; it reads DCPG. GTP contacts are provided by residues 85 to 89 and 140 to 143; these read DCPGH and NKAD. Residues 140-143 form a G4 region; sequence NKAD. A G5 region spans residues 178–180; it reads SAL.

It belongs to the TRAFAC class translation factor GTPase superfamily. Classic translation factor GTPase family. EF-Tu/EF-1A subfamily. As to quaternary structure, monomer.

The protein resides in the cytoplasm. The enzyme catalyses GTP + H2O = GDP + phosphate + H(+). GTP hydrolase that promotes the GTP-dependent binding of aminoacyl-tRNA to the A-site of ribosomes during protein biosynthesis. In Rubrobacter xylanophilus (strain DSM 9941 / JCM 11954 / NBRC 16129 / PRD-1), this protein is Elongation factor Tu.